The sequence spans 501 residues: Bifunctional purine biosynthesis protein PurH (501 aa).

The 144-residue stretch at 1–144 folds into the MGS-like domain; the sequence is MKKRALISVF…KNFKDVVVLS (144 aa).

This sequence belongs to the PurH family.

The enzyme catalyses (6R)-10-formyltetrahydrofolate + 5-amino-1-(5-phospho-beta-D-ribosyl)imidazole-4-carboxamide = 5-formamido-1-(5-phospho-D-ribosyl)imidazole-4-carboxamide + (6S)-5,6,7,8-tetrahydrofolate. It carries out the reaction IMP + H2O = 5-formamido-1-(5-phospho-D-ribosyl)imidazole-4-carboxamide. The protein operates within purine metabolism; IMP biosynthesis via de novo pathway; 5-formamido-1-(5-phospho-D-ribosyl)imidazole-4-carboxamide from 5-amino-1-(5-phospho-D-ribosyl)imidazole-4-carboxamide (10-formyl THF route): step 1/1. It participates in purine metabolism; IMP biosynthesis via de novo pathway; IMP from 5-formamido-1-(5-phospho-D-ribosyl)imidazole-4-carboxamide: step 1/1. This chain is Bifunctional purine biosynthesis protein PurH, found in Clostridium perfringens (strain SM101 / Type A).